The sequence spans 335 residues: Biotin synthase (335 aa).

In terms of domain architecture, Radical SAM core spans 50-279 (ADIQRAALLS…KARVRLSAGR (230 aa)). The [4Fe-4S] cluster site is built by cysteine 65, cysteine 69, and cysteine 72. Cysteine 110, cysteine 142, cysteine 202, and arginine 274 together coordinate [2Fe-2S] cluster.

The protein belongs to the radical SAM superfamily. Biotin synthase family. In terms of assembly, homodimer. [4Fe-4S] cluster is required as a cofactor. [2Fe-2S] cluster serves as cofactor.

The enzyme catalyses (4R,5S)-dethiobiotin + (sulfur carrier)-SH + 2 reduced [2Fe-2S]-[ferredoxin] + 2 S-adenosyl-L-methionine = (sulfur carrier)-H + biotin + 2 5'-deoxyadenosine + 2 L-methionine + 2 oxidized [2Fe-2S]-[ferredoxin]. The protein operates within cofactor biosynthesis; biotin biosynthesis; biotin from 7,8-diaminononanoate: step 2/2. Functionally, catalyzes the conversion of dethiobiotin (DTB) to biotin by the insertion of a sulfur atom into dethiobiotin via a radical-based mechanism. The protein is Biotin synthase of Methylorubrum extorquens (strain CM4 / NCIMB 13688) (Methylobacterium extorquens).